A 151-amino-acid chain; its full sequence is Endoribonuclease YbeY (151 aa).

Zn(2+)-binding residues include His-117, His-121, and His-127.

This sequence belongs to the endoribonuclease YbeY family. The cofactor is Zn(2+).

The protein resides in the cytoplasm. In terms of biological role, single strand-specific metallo-endoribonuclease involved in late-stage 70S ribosome quality control and in maturation of the 3' terminus of the 16S rRNA. The polypeptide is Endoribonuclease YbeY (Alkaliphilus oremlandii (strain OhILAs) (Clostridium oremlandii (strain OhILAs))).